A 25-amino-acid polypeptide reads, in one-letter code: Caerin-1.19 (25 aa).

A Leucine amide modification is found at Leu-25.

The protein belongs to the frog skin active peptide (FSAP) family. Caerin subfamily. Expressed by the skin dorsal glands.

It localises to the secreted. In terms of biological role, caerin-1.19 shows significant activity against Gram-positive organisms, but is less effective against Gram-negative organisms. The sequence is that of Caerin-1.19 from Ranoidea gracilenta (Dainty green tree frog).